A 103-amino-acid polypeptide reads, in one-letter code: Protein reprimo A (103 aa).

The helical transmembrane segment at 50–70 threads the bilayer; the sequence is IVQIAVMCVLSLTVVFGIFFL.

Belongs to the reprimo family.

The protein resides in the cytoplasm. The protein localises to the membrane. Its function is as follows. May be involved in the regulation of p53-dependent G2 arrest of the cell cycle. The protein is Protein reprimo A of Danio rerio (Zebrafish).